The following is a 233-amino-acid chain: UPF0725 protein At4g17990 (233 aa).

Belongs to the UPF0725 (EMB2204) family.

The chain is UPF0725 protein At4g17990 from Arabidopsis thaliana (Mouse-ear cress).